Consider the following 331-residue polypeptide: 6-phosphogluconolactonase (331 aa).

Position 287 is an N6-acetyllysine (K287).

The protein belongs to the cycloisomerase 2 family.

The enzyme catalyses 6-phospho-D-glucono-1,5-lactone + H2O = 6-phospho-D-gluconate + H(+). It participates in carbohydrate degradation; pentose phosphate pathway; D-ribulose 5-phosphate from D-glucose 6-phosphate (oxidative stage): step 2/3. Catalyzes the hydrolysis of 6-phosphogluconolactone to 6-phosphogluconate. This is 6-phosphogluconolactonase from Shigella flexneri.